Reading from the N-terminus, the 443-residue chain is ATP-dependent protease ATPase subunit HslU (443 aa).

Residues Ile-18, 60–65 (GVGKTE), Asp-256, Glu-321, and Arg-393 each bind ATP.

Belongs to the ClpX chaperone family. HslU subfamily. A double ring-shaped homohexamer of HslV is capped on each side by a ring-shaped HslU homohexamer. The assembly of the HslU/HslV complex is dependent on binding of ATP.

It localises to the cytoplasm. ATPase subunit of a proteasome-like degradation complex; this subunit has chaperone activity. The binding of ATP and its subsequent hydrolysis by HslU are essential for unfolding of protein substrates subsequently hydrolyzed by HslV. HslU recognizes the N-terminal part of its protein substrates and unfolds these before they are guided to HslV for hydrolysis. This chain is ATP-dependent protease ATPase subunit HslU, found in Escherichia coli O17:K52:H18 (strain UMN026 / ExPEC).